The primary structure comprises 833 residues: Probable serine/threonine-protein kinase DDB_G0277165 (833 aa).

The region spanning phenylalanine 9–phenylalanine 262 is the Protein kinase domain. Residues leucine 15–valine 23 and lysine 38 each bind ATP. Residue aspartate 133 is the Proton acceptor of the active site. One can recognise a UBA domain in the interval glutamine 288–glutamate 329. Over residues asparagine 338–serine 351 the composition is skewed to basic and acidic residues. 3 disordered regions span residues asparagine 338 to serine 472, glutamine 528 to isoleucine 626, and phenylalanine 764 to asparagine 799. Composition is skewed to low complexity over residues asparagine 365 to asparagine 432 and serine 441 to serine 459. Polar residues predominate over residues asparagine 460–serine 472. Residues glutamine 528–serine 589 are compositionally biased toward low complexity. The span at glycine 600–glutamate 625 shows a compositional bias: polar residues.

This sequence belongs to the protein kinase superfamily. CAMK Ser/Thr protein kinase family.

The catalysed reaction is L-seryl-[protein] + ATP = O-phospho-L-seryl-[protein] + ADP + H(+). The enzyme catalyses L-threonyl-[protein] + ATP = O-phospho-L-threonyl-[protein] + ADP + H(+). In Dictyostelium discoideum (Social amoeba), this protein is Probable serine/threonine-protein kinase DDB_G0277165.